The sequence spans 442 residues: Transcription factor MYCFIDRAFT_198930 (442 aa).

Residues 1 to 34 are disordered; that stretch reads MSTTPMAAPPGADLKPVTSSRGRSSTSDEQKLRS. A DNA-binding region (zn(2)-C6 fungal-type) is located at residues 36 to 63; that stretch reads CESCAQSKLKCSGDKPACARCAKRGLAC. Positions 74–107 are disordered; that stretch reads KPKGYTSTNDNNPSKRREDSHSPAASQWSSTGHL. Residues 96–107 show a composition bias toward polar residues; sequence PAASQWSSTGHL.

It is found in the nucleus. Functionally, transcription factor that positively regulates the expression of the gene cluster that mediates the biosynthesis of an emodin derivative that may be involved in black Sigatoka disease of banana. This Pseudocercospora fijiensis (strain CIRAD86) (Black leaf streak disease fungus) protein is Transcription factor MYCFIDRAFT_198930.